Reading from the N-terminus, the 371-residue chain is Ferrochelatase (371 aa).

Fe cation-binding residues include His218 and Glu299.

It belongs to the ferrochelatase family.

The protein resides in the cytoplasm. The enzyme catalyses heme b + 2 H(+) = protoporphyrin IX + Fe(2+). It participates in porphyrin-containing compound metabolism; protoheme biosynthesis; protoheme from protoporphyrin-IX: step 1/1. In terms of biological role, catalyzes the ferrous insertion into protoporphyrin IX. The chain is Ferrochelatase from Cupriavidus pinatubonensis (strain JMP 134 / LMG 1197) (Cupriavidus necator (strain JMP 134)).